A 241-amino-acid polypeptide reads, in one-letter code: Sugar fermentation stimulation protein homolog (241 aa).

Belongs to the SfsA family.

The chain is Sugar fermentation stimulation protein homolog from Thermosynechococcus vestitus (strain NIES-2133 / IAM M-273 / BP-1).